The primary structure comprises 332 residues: MIGVIFGVIVPYIAVAIFVIGVIYRIVNWANSAVPLKIPTTGGQQKSFPFIKRTIYDRFDSPYTWWETAGRMLLEIFFFRSLLKNTRYYLDRVSQKDARWLWLFGILFHYSLLLVLIRHSRFFLDPVPSFVETLSEIEAFKGVFIPSVYMSGLAIVAALFLLWLRRIFLSRERTLSLPSDHFALILLLAITISGNVMRYFVKADLFAVKELLMSLMTFNIGHAVEVANTIEPIFYVHFALASFLLAYFPFSKLMHAGGVFFSPTRNMPNDNRARRHVNPWDPADVPLLAKGITVAGRVYKSKKLDWDTYYSMYTDQLQEIEEADYKIVPEEL.

5 helical membrane-spanning segments follow: residues 3–23 (GVIFGVIVPYIAVAIFVIGVI), 97–117 (DARWLWLFGILFHYSLLLVLI), 143–163 (VFIPSVYMSGLAIVAALFLLW), 177–197 (LPSDHFALILLLAITISGNVM), and 230–250 (IEPIFYVHFALASFLLAYFPF).

Consists of five subunits: an integral membrane subunit, a cytochrome b-like subunit, a cytochrome c subunit and two iron-sulfur subunits.

Its subcellular location is the cell membrane. Its function is as follows. Has menaquinol-oxidizing activity. HmeC and HmeD subunits may together mediate electron transfer from menaquinol to an unidentified electron acceptor on the cytoplasmic side of the membrane. This is Hdr-like menaquinol oxidoreductase cytochrome b-like subunit (hmeC) from Archaeoglobus fulgidus (strain ATCC 49558 / DSM 4304 / JCM 9628 / NBRC 100126 / VC-16).